A 134-amino-acid polypeptide reads, in one-letter code: Large ribosomal subunit protein uL16c (134 aa).

Residues 1-22 form a disordered region; the sequence is MLSPKRTRFRKQHRGRMKGISH.

Belongs to the universal ribosomal protein uL16 family. Part of the 50S ribosomal subunit.

It localises to the plastid. The protein resides in the chloroplast. This is Large ribosomal subunit protein uL16c from Nicotiana tabacum (Common tobacco).